Reading from the N-terminus, the 397-residue chain is Meiotic driver wtf28 (397 aa).

2 disordered regions span residues 1-41 (MKNK…GNTL) and 65-102 (NWNK…SGTA). The segment covering 11–29 (SMDELSTKNDNEIDLEKGP) has biased composition (basic and acidic residues). 9 helical membrane-spanning segments follow: residues 108-128 (FLIK…PAVC), 145-165 (WVYF…LWCF), 175-195 (VTVI…AQCV), 205-225 (CIKV…VGLY), 230-250 (DLVV…FGCV), 266-286 (SSIS…IWTL), 290-310 (LFGL…TKGL), 320-340 (ATGY…LFFY), and 357-377 (NGIA…ANAI).

It belongs to the WTF family. In terms of assembly, homomer. Forms protein aggregates. The two isoforms can interact with each other and with themselves. High sequence similarity is required for their interaction.

It is found in the spore membrane. The protein resides in the vacuole membrane. The protein localises to the ascus epiplasm. It localises to the cytoplasm. Its subcellular location is the endoplasmic reticulum membrane. In terms of biological role, promotes unequal transmission of alleles from the parental zygote to progeny spores by acting as poison/antidote system where the poison and antidote proteins are produced from the same locus; the poison component is trans-acting and targets all spores within an ascus whereas the antidote component is spore-specific, leading to poisoning of all progeny that do not inherit the allele. Localizes isoform 2 to the vacuole thereby facilitating its degradation. Its function is as follows. Forms toxic aggregates that disrupt spore maturation. This Schizosaccharomyces kambucha (Fission yeast) protein is Meiotic driver wtf28.